Consider the following 135-residue polypeptide: Ribosome-binding factor A (135 aa).

It belongs to the RbfA family. As to quaternary structure, monomer. Binds 30S ribosomal subunits, but not 50S ribosomal subunits or 70S ribosomes.

The protein localises to the cytoplasm. Functionally, one of several proteins that assist in the late maturation steps of the functional core of the 30S ribosomal subunit. Associates with free 30S ribosomal subunits (but not with 30S subunits that are part of 70S ribosomes or polysomes). Required for efficient processing of 16S rRNA. May interact with the 5'-terminal helix region of 16S rRNA. This is Ribosome-binding factor A from Methylobacterium nodulans (strain LMG 21967 / CNCM I-2342 / ORS 2060).